The following is a 193-amino-acid chain: Interleukin-18 (193 aa).

The propeptide occupies 1 to 36 (MAAEQVEDNCISFVEMKFINNTLYFVAENDEDLESD).

This sequence belongs to the IL-1 family. As to quaternary structure, forms a ternary complex with ligand-binding receptor subunit IL18R1 and signaling receptor subunit IL18RAP at the plasma membrane. Mature IL18 first binds to IL18R1 forming a low affinity binary complex, which then interacts with IL18RAP to form a high affinity ternary complex that signals inside the cell. Interacts with cargo receptor TMED10; the interaction mediates the translocation from the cytoplasm into the ERGIC (endoplasmic reticulum-Golgi intermediate compartment) and thereby secretion. In terms of processing, the pro-IL-18 precursor is processed by CASP1, CASP4 or CASP5 to yield its mature, active form. The pro-IL-18 precursor features autoinhibitory interactions between the propeptide and the post-cleavage-site region, preventing recognition by the IL18R1 receptor. Processing by CASP1, CASP4 or CASP5 induces conformational changes to generate critical receptor-binding sites. The mature form is then secreted and released in the extracellular milieu by passing through the gasdermin-D (GSDMD) pore. In contrast, cleavage by CASP3 inactivates IL18.

The protein resides in the cytoplasm. Its subcellular location is the cytosol. It localises to the secreted. Functionally, pro-inflammatory cytokine primarily involved in epithelial barrier repair, polarized T-helper 1 (Th1) cell and natural killer (NK) cell immune responses. Upon binding to IL18R1 and IL18RAP, forms a signaling ternary complex which activates NF-kappa-B, triggering synthesis of inflammatory mediators. Synergizes with IL12/interleukin-12 to induce IFNG synthesis from T-helper 1 (Th1) cells and natural killer (NK) cells. Involved in transduction of inflammation downstream of pyroptosis: its mature form is specifically released in the extracellular milieu by passing through the gasdermin-D (GSDMD) pore. In Boselaphus tragocamelus (Nilgai), this protein is Interleukin-18 (IL18).